The primary structure comprises 136 residues: Large ribosomal subunit protein bL21 (136 aa).

Belongs to the bacterial ribosomal protein bL21 family. Part of the 50S ribosomal subunit. Contacts protein L20.

This protein binds to 23S rRNA in the presence of protein L20. The chain is Large ribosomal subunit protein bL21 from Gloeothece citriformis (strain PCC 7424) (Cyanothece sp. (strain PCC 7424)).